A 439-amino-acid polypeptide reads, in one-letter code: tRNA-2-methylthio-N(6)-dimethylallyladenosine synthase (439 aa).

The 114-residue stretch at 2–115 (KGLYIKTYGC…LPELIVKASR (114 aa)) folds into the MTTase N-terminal domain. Residues C11, C47, C78, C155, C159, and C162 each coordinate [4Fe-4S] cluster. Residues 141–372 (NSQGSSAFLA…QKLISKQQLE (232 aa)) enclose the Radical SAM core domain. A TRAM domain is found at 375–439 (QSMVGKTIPV…QSSLLGCAFH (65 aa)).

Belongs to the methylthiotransferase family. MiaB subfamily. As to quaternary structure, monomer. The cofactor is [4Fe-4S] cluster.

The protein localises to the cytoplasm. The catalysed reaction is N(6)-dimethylallyladenosine(37) in tRNA + (sulfur carrier)-SH + AH2 + 2 S-adenosyl-L-methionine = 2-methylsulfanyl-N(6)-dimethylallyladenosine(37) in tRNA + (sulfur carrier)-H + 5'-deoxyadenosine + L-methionine + A + S-adenosyl-L-homocysteine + 2 H(+). In terms of biological role, catalyzes the methylthiolation of N6-(dimethylallyl)adenosine (i(6)A), leading to the formation of 2-methylthio-N6-(dimethylallyl)adenosine (ms(2)i(6)A) at position 37 in tRNAs that read codons beginning with uridine. This Wolbachia pipientis wMel protein is tRNA-2-methylthio-N(6)-dimethylallyladenosine synthase.